A 376-amino-acid chain; its full sequence is Protein STRICTOSIDINE SYNTHASE-LIKE 2 (376 aa).

The first 23 residues, 1–23 (MMKLLLVVATSVALIFSVTDLSG), serve as a signal peptide directing secretion. 2 N-linked (GlcNAc...) asparagine glycosylation sites follow: N79 and N244.

The protein belongs to the strictosidine synthase family.

Its subcellular location is the vacuole. The protein is Protein STRICTOSIDINE SYNTHASE-LIKE 2 of Arabidopsis thaliana (Mouse-ear cress).